The primary structure comprises 68 residues: ATP synthase F(0) complex subunit 8 (68 aa).

The helical transmembrane segment at 8–24 (TWLITILSMILTLLIVF) threads the bilayer. Lys-54 bears the N6-acetyllysine; alternate mark. Lys-54 is modified (N6-succinyllysine; alternate). Position 57 is an N6-acetyllysine (Lys-57).

It belongs to the ATPase protein 8 family. Component of the ATP synthase complex composed at least of ATP5F1A/subunit alpha, ATP5F1B/subunit beta, ATP5MC1/subunit c (homooctomer), MT-ATP6/subunit a, MT-ATP8/subunit 8, ATP5ME/subunit e, ATP5MF/subunit f, ATP5MG/subunit g, ATP5MK/subunit k, ATP5MJ/subunit j, ATP5F1C/subunit gamma, ATP5F1D/subunit delta, ATP5F1E/subunit epsilon, ATP5PF/subunit F6, ATP5PB/subunit b, ATP5PD/subunit d, ATP5PO/subunit OSCP. ATP synthase complex consists of a soluble F(1) head domain (subunits alpha(3) and beta(3)) - the catalytic core - and a membrane F(0) domain - the membrane proton channel (subunits c, a, 8, e, f, g, k and j). These two domains are linked by a central stalk (subunits gamma, delta, and epsilon) rotating inside the F1 region and a stationary peripheral stalk (subunits F6, b, d, and OSCP). Interacts with PRICKLE3.

It is found in the mitochondrion membrane. Its function is as follows. Subunit 8, of the mitochondrial membrane ATP synthase complex (F(1)F(0) ATP synthase or Complex V) that produces ATP from ADP in the presence of a proton gradient across the membrane which is generated by electron transport complexes of the respiratory chain. ATP synthase complex consist of a soluble F(1) head domain - the catalytic core - and a membrane F(1) domain - the membrane proton channel. These two domains are linked by a central stalk rotating inside the F(1) region and a stationary peripheral stalk. During catalysis, ATP synthesis in the catalytic domain of F(1) is coupled via a rotary mechanism of the central stalk subunits to proton translocation. In vivo, can only synthesize ATP although its ATP hydrolase activity can be activated artificially in vitro. Part of the complex F(0) domain. The protein is ATP synthase F(0) complex subunit 8 of Lemur catta (Ring-tailed lemur).